Reading from the N-terminus, the 808-residue chain is DNA replication licensing factor MCM3 (808 aa).

At Ala2 the chain carries N-acetylalanine. Residues Ser160 and Ser275 each carry the phosphoserine modification. Residue Lys293 is modified to N6-acetyllysine. One can recognise an MCM domain in the interval 295-502 (IFDQLARSLA…QDREISDHVL (208 aa)). The ADP site is built by Gln353, Leu393, Glu394, Ala395, and Ala397. Residues 477-480 (SRFD) carry the Arginine finger motif. ATP is bound at residue Ala523. Ser535 carries the post-translational modification Phosphoserine; by ATM. An N6-acetyllysine modification is found at Lys547. Ser611 bears the Phosphoserine mark. Residues 662-739 (KKRKKRSEDE…ETKESQKVEL (78 aa)) are disordered. An ATP-binding site is contributed by Arg664. A phosphoserine mark is found at Ser668, Ser672, and Ser681. The segment covering 679 to 688 (EKSQEDQEQK) has biased composition (basic and acidic residues). Tyr708 is modified (phosphotyrosine). Thr713 and Thr722 each carry phosphothreonine. Residues 727-739 (DSQETKESQKVEL) are compositionally biased toward basic and acidic residues. Residues Ser728 and Ser734 each carry the phosphoserine modification.

Belongs to the MCM family. Component of the MCM2-7 complex. The complex forms a toroidal hexameric ring with the proposed subunit order MCM2-MCM6-MCM4-MCM7-MCM3-MCM5. Component of the CMG helicase complex, a hexameric ring of related MCM2-7 subunits stabilized by CDC45 and the tetrameric GINS complex. Associated with the replication-specific DNA polymerase alpha. Interacts with MCMBP. Interacts with ANKRD17. Interacts with MCM3AP isoform MCM3AP; this interaction leads to MCM3 acetylation. In terms of processing, acetylated by MCM3AP. O-glycosylated (O-GlcNAcylated), in a cell cycle-dependent manner.

The protein localises to the nucleus. It localises to the chromosome. It catalyses the reaction ATP + H2O = ADP + phosphate + H(+). Functionally, acts as a component of the MCM2-7 complex (MCM complex) which is the replicative helicase essential for 'once per cell cycle' DNA replication initiation and elongation in eukaryotic cells. Core component of CDC45-MCM-GINS (CMG) helicase, the molecular machine that unwinds template DNA during replication, and around which the replisome is built. The active ATPase sites in the MCM2-7 ring are formed through the interaction surfaces of two neighboring subunits such that a critical structure of a conserved arginine finger motif is provided in trans relative to the ATP-binding site of the Walker A box of the adjacent subunit. The six ATPase active sites, however, are likely to contribute differentially to the complex helicase activity. Required for the entry in S phase and for cell division. This Bos taurus (Bovine) protein is DNA replication licensing factor MCM3 (MCM3).